Consider the following 158-residue polypeptide: Large ribosomal subunit protein uL16 (158 aa).

The protein belongs to the universal ribosomal protein uL16 family. In terms of assembly, part of the 50S ribosomal subunit.

Its function is as follows. Binds 23S rRNA and is also seen to make contacts with the A and possibly P site tRNAs. This is Large ribosomal subunit protein uL16 from Synechococcus sp. (strain CC9902).